An 872-amino-acid polypeptide reads, in one-letter code: MGLKRPWLLGAVVLLTLIQVQGGLAEWTQCRMGFSKEKYSFLVPKNLETDKALGRVIFNSCEGPVRIQFASKDPNFEIHKDGTVYIKNPAKMKDNRKTFRVLAWETKGHVYSTNITLKREGHRHRQDLFSGKHSHHPKSETGLKRQKRDWVIPPIIVSENEKGPFPKRIVQIKSSYAKEVKVYYSITGQGADTPPEGVFAIGREDGWLNVTRPLDREAIDNYVLFSHAVSSNGANVEDPMEIIIKVQDQNDNDPVFTQSVFEGSVPEGSKPGTAVMTVSATDADDSVDMYNGVITYSILNQEPKEPTNKMFTIHSESGLISVLTTGLDREKNPVYTLTIQAADGEFGKDRTTTATALIVVMDTNDNPPVFDPTQYTAKVPENEVGYEVARLTVTDEDIEGTDAWNAVYKIIKGNEANYFSIQTDTGNIGLLKTVKGLDYELKKQYILSVIVTNKANFSVPLQTSTATVTVSVEDVNEAPIFLPPVKEVSVSEDLPSGQVVATYTAQDPDKEQNQKITYVIGNDPAGWVSVNKDNGIVTGNGNLDRESKFVLNNTYKVIILAADSGSPSATGTGTLVLNLLDVNDNGPFLEPQQESFCQKDPGFRVFTIIDRDLSPNTYPYKAELTGESNENWTAIVTGQSILELRPKKELEIGQYDVMITLLDSFGLSNVTKLHITICQCDGDKMQCEEKAAIAGGLGISAIVGILGGILALLLLLLLLLLFVRRKKVVKEPLLPPEDETRDNVFSYDEEGGGEEDQDFDLSQLHRGLDARPDVIRNDVAPVLAAPQYRPRPANPDEIGNFIDENLNAADNDPTAPPYDSLLVFDYEGSGSEAASLSSLNSPNSDLDQDYSALNDWGPRFTKLADMYGGDED.

Positions 1–25 (MGLKRPWLLGAVVLLTLIQVQGGLA) are cleaved as a signal peptide. A propeptide spanning residues 26-148 (EWTQCRMGFS…SETGLKRQKR (123 aa)) is cleaved from the precursor. 5 consecutive Cadherin domains span residues 148 to 256 (RDWV…DPVF), 257 to 370 (TQSV…PPVF), 371 to 481 (DPTQ…APIF), 482 to 589 (LPPV…GPFL), and 605 to 688 (VFTI…MQCE). Over 149-701 (DWVIPPIIVS…AIAGGLGISA (553 aa)) the chain is Extracellular. A glycan (N-linked (GlcNAc...) asparagine) is linked at Asn209. Residues Asp251 and Asp282 each coordinate Ca(2+). Residues Asn456, Asn552, Asn631, and Asn669 are each glycosylated (N-linked (GlcNAc...) asparagine). A helical transmembrane segment spans residues 702 to 722 (IVGILGGILALLLLLLLLLLF). The Cytoplasmic segment spans residues 723 to 872 (VRRKKVVKEP…LADMYGGDED (150 aa)). Residues 739–758 (ETRDNVFSYDEEGGGEEDQD) form a disordered region. A compositionally biased stretch (acidic residues) spans 747–758 (YDEEGGGEEDQD).

In terms of assembly, homodimer. In terms of tissue distribution, abundantly expressed in intestine, stomach, liver, kidney, skin and eye. Also expressed in heart, lung, testis, ovary, muscle and brain.

The protein localises to the cell junction. The protein resides in the adherens junction. It is found in the cell membrane. Its subcellular location is the endosome. It localises to the golgi apparatus. The protein localises to the trans-Golgi network. The protein resides in the cytoplasm. It is found in the desmosome. Functionally, cadherins are calcium-dependent cell adhesion proteins. They preferentially interact with themselves in a homophilic manner in connecting cells; cadherins may thus contribute to the sorting of heterogeneous cell types. Promotes organization of radial actin fiber structure and cellular response to contractile forces, via anchoring of radial actin fibers to CDH1 junction complexes at the cell membrane. E-cadherin is a ligand for integrin alpha-E/beta-7. This is Cadherin-1 (cdh1) from Xenopus laevis (African clawed frog).